Reading from the N-terminus, the 635-residue chain is Probable extracellular metalloproteinase 1 (635 aa).

An N-terminal signal peptide occupies residues 1-19 (MHGLLLAAGLLSLPLHVLA). The propeptide occupies 20-246 (HPQPSTSTSL…VHNVVDYVAH (227 aa)). N287 carries an N-linked (GlcNAc...) asparagine glycan. H430 contributes to the Zn(2+) binding site. E431 is an active-site residue. H434 provides a ligand contact to Zn(2+). Residues N475, N594, and N623 are each glycosylated (N-linked (GlcNAc...) asparagine).

Belongs to the peptidase M36 family. Requires Zn(2+) as cofactor.

It is found in the secreted. Functionally, secreted metalloproteinase probably acting as a virulence factor. This is Probable extracellular metalloproteinase 1 (MEP1) from Arthroderma benhamiae (strain ATCC MYA-4681 / CBS 112371) (Trichophyton mentagrophytes).